We begin with the raw amino-acid sequence, 60 residues long: Large ribosomal subunit protein uL30 (60 aa).

It belongs to the universal ribosomal protein uL30 family. Part of the 50S ribosomal subunit.

The sequence is that of Large ribosomal subunit protein uL30 from Salinispora tropica (strain ATCC BAA-916 / DSM 44818 / JCM 13857 / NBRC 105044 / CNB-440).